The chain runs to 394 residues: Phosphoglycerate kinase (394 aa).

Substrate-binding positions include 21–23 (DFN), Arg36, 59–62 (HLGR), Arg118, and Arg151. Phosphoserine is present on Ser183. ATP is bound by residues Lys201 and Gly292. Position 299 is a phosphothreonine (Thr299). Residues Glu323 and 350–353 (GGDS) each bind ATP.

It belongs to the phosphoglycerate kinase family. As to quaternary structure, monomer.

The protein resides in the cytoplasm. It catalyses the reaction (2R)-3-phosphoglycerate + ATP = (2R)-3-phospho-glyceroyl phosphate + ADP. It functions in the pathway carbohydrate degradation; glycolysis; pyruvate from D-glyceraldehyde 3-phosphate: step 2/5. This is Phosphoglycerate kinase from Bacillus cereus (strain Q1).